The following is a 417-amino-acid chain: MDVKQNYEQAKKQYEKWGVNVEDALEKLKQIPISIHCWQGDDVTGFEVNQQELSGGIDVTGNYPGKATTPEELRDDLDKALSLIPGMHRVNLHAIYAETNGEAVERDEIEPKHFENWVKWAKENGLGLDFNPTLFSHPKADDGLTLAHPNKEIRDFWIRHTIASRKIAAYMGKELGTSALTNIWTPDGYKDIPSDRLTPRKRLEDSLNQIFEEEIDKEYNVDAVESKLFGIGSEAYVVGSHEFYMGYALKNNKLCLLDTGHYHPTEMVSNKISSMLLYSDELALHVSRPVRWDSDHVVILDDELREIGLEIVRNDALDKVRIGLDFFDASINRIAAWTIGTRNMIKSLLYALLTPNEHLKQLQEEGNFTDRLAIMEELKTYPFGAIWDYYCESMNVPVGESWLTEVKEYEKEVLSKR.

3 residues coordinate Mn(2+): His-261, Asp-293, and Asp-295.

Belongs to the rhamnose isomerase family. The cofactor is Mn(2+).

It localises to the cytoplasm. The enzyme catalyses L-rhamnopyranose = L-rhamnulose. Its pathway is carbohydrate degradation; L-rhamnose degradation; glycerone phosphate from L-rhamnose: step 1/3. Functionally, catalyzes the interconversion of L-rhamnose and L-rhamnulose. The sequence is that of L-rhamnose isomerase from Oceanobacillus iheyensis (strain DSM 14371 / CIP 107618 / JCM 11309 / KCTC 3954 / HTE831).